The chain runs to 180 residues: Chromosome-anchoring protein RacA (180 aa).

The segment at residues 5–25 (TPFIAKKLGVSPKAVVRIAQQ) is a DNA-binding region (H-T-H motif). A coiled-coil region spans residues 67-151 (KASSNEVEEL…LEAALTKEEP (85 aa)).

It belongs to the RacA family.

It localises to the cytoplasm. Its function is as follows. Required for the formation of axial filaments and for anchoring the origin regions at the cell poles in sporulating cells, thus ensuring proper chromosome segregation in the prespore. Binds in a dispersed manner throughout the chromosome but preferentially to sites clustered in the origin portion of the chromosome, causing condensation of the chromosome and its remodeling into an elongated, anchored structure. The polypeptide is Chromosome-anchoring protein RacA (Bacillus cereus (strain B4264)).